Consider the following 355-residue polypeptide: Holliday junction branch migration complex subunit RuvB (355 aa).

Residues 4–195 are large ATPase domain (RuvB-L); that stretch reads TDKLTGADRL…FGIVARLEFY (192 aa). Residues L34, R35, G76, K79, T80, T81, 142 to 144, R185, Y195, and R232 each bind ATP; that span reads EDY. T80 is a Mg(2+) binding site. The small ATPAse domain (RuvB-S) stretch occupies residues 196–266; it reads TPDELARIVA…LADAALEMLD (71 aa). Residues 269 to 355 are head domain (RuvB-H); it reads SVGFDLMDRK…DGGADLAEGL (87 aa). DNA-binding residues include R305, R324, and R329.

It belongs to the RuvB family. As to quaternary structure, homohexamer. Forms an RuvA(8)-RuvB(12)-Holliday junction (HJ) complex. HJ DNA is sandwiched between 2 RuvA tetramers; dsDNA enters through RuvA and exits via RuvB. An RuvB hexamer assembles on each DNA strand where it exits the tetramer. Each RuvB hexamer is contacted by two RuvA subunits (via domain III) on 2 adjacent RuvB subunits; this complex drives branch migration. In the full resolvosome a probable DNA-RuvA(4)-RuvB(12)-RuvC(2) complex forms which resolves the HJ.

It is found in the cytoplasm. It carries out the reaction ATP + H2O = ADP + phosphate + H(+). Functionally, the RuvA-RuvB-RuvC complex processes Holliday junction (HJ) DNA during genetic recombination and DNA repair, while the RuvA-RuvB complex plays an important role in the rescue of blocked DNA replication forks via replication fork reversal (RFR). RuvA specifically binds to HJ cruciform DNA, conferring on it an open structure. The RuvB hexamer acts as an ATP-dependent pump, pulling dsDNA into and through the RuvAB complex. RuvB forms 2 homohexamers on either side of HJ DNA bound by 1 or 2 RuvA tetramers; 4 subunits per hexamer contact DNA at a time. Coordinated motions by a converter formed by DNA-disengaged RuvB subunits stimulates ATP hydrolysis and nucleotide exchange. Immobilization of the converter enables RuvB to convert the ATP-contained energy into a lever motion, pulling 2 nucleotides of DNA out of the RuvA tetramer per ATP hydrolyzed, thus driving DNA branch migration. The RuvB motors rotate together with the DNA substrate, which together with the progressing nucleotide cycle form the mechanistic basis for DNA recombination by continuous HJ branch migration. Branch migration allows RuvC to scan DNA until it finds its consensus sequence, where it cleaves and resolves cruciform DNA. This is Holliday junction branch migration complex subunit RuvB from Cupriavidus metallidurans (strain ATCC 43123 / DSM 2839 / NBRC 102507 / CH34) (Ralstonia metallidurans).